The primary structure comprises 277 residues: MSFSSSNFYVILSISLTVFILLFNINKVNSTELTSFTITKFSQDQKNLIFQGNAITTSTGKLQLTKAVKNSIGRALYSAPIHIWDSKTGDVANFETLFTFAITAPYSSNVADGLAFFIAPVDTQPQNIGRAGFLGVFNSETYNKSIQTVAVEIDTFHNTWDPKINRHIGINVNCIKSISTTSWVLENGREANVLVRFDAHTNVLSVVLSYPGLPDSYILSDVVPLKDIVPEWVRIGFSAATGAEFAEHDIRYWSFHSELSLVFNNNNANVSSSVQSA.

The signal sequence occupies residues methionine 1–serine 30. The N-linked (GlcNAc...) asparagine glycan is linked to asparagine 143. The Mn(2+) site is built by glutamate 152 and aspartate 154. 3 residues coordinate Ca(2+): aspartate 154, asparagine 158, and aspartate 161. The Mn(2+) site is built by aspartate 161 and histidine 167. Asparagine 269 carries N-linked (GlcNAc...) asparagine glycosylation.

The protein belongs to the leguminous lectin family.

Functionally, lectin that may be involved in a cell recognition process. The sequence is that of Lectin 1 (LEC1) from Medicago truncatula (Barrel medic).